A 434-amino-acid polypeptide reads, in one-letter code: Trigger factor (434 aa).

One can recognise a PPIase FKBP-type domain in the interval 161 to 246 (KDIVTIDFKG…IHKVEEPQLP (86 aa)).

This sequence belongs to the FKBP-type PPIase family. Tig subfamily.

It is found in the cytoplasm. The enzyme catalyses [protein]-peptidylproline (omega=180) = [protein]-peptidylproline (omega=0). Its function is as follows. Involved in protein export. Acts as a chaperone by maintaining the newly synthesized protein in an open conformation. Functions as a peptidyl-prolyl cis-trans isomerase. This is Trigger factor from Marinobacter nauticus (strain ATCC 700491 / DSM 11845 / VT8) (Marinobacter aquaeolei).